Reading from the N-terminus, the 475-residue chain is ATP-dependent protease ATPase subunit HslU1 (475 aa).

The transit peptide at 1-27 directs the protein to the mitochondrion; the sequence is MMRRVTSSLPSALKLGRSLGPNVRFSG. Residues isoleucine 66, 108–113, aspartate 286, glutamate 353, and arginine 425 each bind ATP; that span reads GVGKTE.

It belongs to the ClpX chaperone family. HslU subfamily. As to quaternary structure, a double ring-shaped homohexamer of HslV is capped on each side by a ring-shaped HslU homohexamer. The assembly of the HslU/HslV complex (HslVU) is dependent on binding of ATP.

The protein localises to the mitochondrion matrix. It localises to the kinetoplast. Its function is as follows. ATPase subunit of a proteasome-like degradation complex; this subunit has chaperone activity. The binding of ATP and its subsequent hydrolysis by HslU are essential for unfolding of protein substrates subsequently hydrolyzed by HslV. HslU recognizes the N-terminal part of its protein substrates and unfolds these before they are guided to HslV for hydrolysis. The HslVU protease complex functions in mitochondrial DNA replication by regulating DNA helicase PIF2 protein levels. In Trypanosoma brucei brucei (strain 927/4 GUTat10.1), this protein is ATP-dependent protease ATPase subunit HslU1 (HslU1).